Consider the following 329-residue polypeptide: Ketol-acid reductoisomerase (NADP(+)) (329 aa).

The region spanning 2-182 (TQLFYDTDAD…GGTRAGILET (181 aa)) is the KARI N-terminal Rossmann domain. NADP(+) contacts are provided by residues 25-28 (YGSQ), Ser51, Ser53, and 83-86 (DEFQ). Residue His108 is part of the active site. Residue Gly134 participates in NADP(+) binding. The region spanning 183-328 (NFKEETETDL…KGLRSMFSWL (146 aa)) is the KARI C-terminal knotted domain. Mg(2+) is bound by residues Asp191, Glu195, Glu227, and Glu231. Ser252 is a substrate binding site.

The protein belongs to the ketol-acid reductoisomerase family. Requires Mg(2+) as cofactor.

The catalysed reaction is (2R)-2,3-dihydroxy-3-methylbutanoate + NADP(+) = (2S)-2-acetolactate + NADPH + H(+). It catalyses the reaction (2R,3R)-2,3-dihydroxy-3-methylpentanoate + NADP(+) = (S)-2-ethyl-2-hydroxy-3-oxobutanoate + NADPH + H(+). The protein operates within amino-acid biosynthesis; L-isoleucine biosynthesis; L-isoleucine from 2-oxobutanoate: step 2/4. It functions in the pathway amino-acid biosynthesis; L-valine biosynthesis; L-valine from pyruvate: step 2/4. Involved in the biosynthesis of branched-chain amino acids (BCAA). Catalyzes an alkyl-migration followed by a ketol-acid reduction of (S)-2-acetolactate (S2AL) to yield (R)-2,3-dihydroxy-isovalerate. In the isomerase reaction, S2AL is rearranged via a Mg-dependent methyl migration to produce 3-hydroxy-3-methyl-2-ketobutyrate (HMKB). In the reductase reaction, this 2-ketoacid undergoes a metal-dependent reduction by NADPH to yield (R)-2,3-dihydroxy-isovalerate. The chain is Ketol-acid reductoisomerase (NADP(+)) from Prochlorococcus marinus (strain MIT 9312).